The primary structure comprises 283 residues: SNF1-related protein kinase regulatory subunit beta-1 (283 aa).

Positions 1 to 10 are enriched in basic and acidic residues; it reads MGNANGKDED. The segment at 1–63 is disordered; the sequence is MGNANGKDED…PARSPSPFLF (63 aa). Gly2 carries N-myristoyl glycine lipidation. Residues 43-60 are compositionally biased toward low complexity; sequence SDSMSSSPPGSPARSPSP. Positions 101–178 are kinase-interacting sequence (KIS); it reads PTIITWNQGG…VGNVCNILDV (78 aa). Residues 215–283 form an association with SNF1 complex (ASC) region; sequence EPLAVPPQLH…TVVLYKPLTR (69 aa).

This sequence belongs to the 5'-AMP-activated protein kinase beta subunit family. As to quaternary structure, subunit of a probable heterotrimeric complex consisting of an alpha catalytic (KIN10 or KIN11) subunit, and a beta (KINB) and a gamma (KING or SNF4) non-catalytic regulatory subunits. Interacts with SNF4 and CBL1. Interacts with FLZ1, FLZ2, FLZ8, FLZ9, FLZ10, FLZ12, FLZ13, FLZ14 and FLZ15. In terms of processing, sumoylated by SIZ1. As to expression, expressed in vegetative organs and, to lower extent, in reproductive organs.

The protein localises to the cell membrane. Its function is as follows. Regulatory subunit of the probable trimeric SNF1-related protein kinase (SnRK) complex, which may play a role in a signal transduction cascade regulating gene expression and carbohydrate metabolism in higher plants. The SnRK complex may also be involved in the regulation of fatty acid synthesis by phosphorylation of acetyl-CoA carboxylase and in assimilation of nitrogen by phosphorylating nitrate reductase. The chain is SNF1-related protein kinase regulatory subunit beta-1 (KINB1) from Arabidopsis thaliana (Mouse-ear cress).